The sequence spans 99 residues: CLAVATA3/ESR (CLE)-related protein 41 (99 aa).

A signal peptide spans 1–34 (MATSNDQTNTKSSHSRTLLLLFIFLSLLLFSSLT). Residues 60–99 (ASSTMDLRPKASTRRSRTSRRREFGNDAHEVPSGPNPISN) are disordered. Over residues 70–79 (ASTRRSRTSR) the composition is skewed to basic residues. Basic and acidic residues predominate over residues 80 to 89 (RREFGNDAHE). Residues P91 and P94 each carry the hydroxyproline modification. Residue P94 is glycosylated (O-linked (Ara...) hydroxyproline).

This sequence belongs to the CLV3/ESR signal peptide family. In terms of assembly, CLE41p interacts specifically with the leucine-rich repeat receptor-like protein kinase TDR. The O-glycosylation (arabinosylation) of the hydroxyproline Pro-94 enhances binding affinity of the CLE41p peptide for its receptor. In terms of tissue distribution, mostly expressed in inflorescence and roots, and, to a lower extent, in seedlings, flowers, leaves and siliques. Observed along the vascular strands in cotyledons, leaves and roots, but not in shoot apical meristems (SAM). Restricted to the phloem and the neighboring pericycle cells in the roots and hypocotyls.

It localises to the secreted. Its subcellular location is the extracellular space. Extracellular signal peptide that regulates cell fate. May act with TDR as a ligand-receptor pair in a signal transduction pathway that represses tracheary element differentiation but promotes the formation of procambial cells adjacent to phloem cells in the veins in an auxin-dependent manner. Regulates the transition of protophloem cells from proliferation to differentiation, thus impinging on postembryonic growth capacity of the root meristem; this signaling pathway requires CRN and CLV2. The sequence is that of CLAVATA3/ESR (CLE)-related protein 41 from Arabidopsis thaliana (Mouse-ear cress).